A 561-amino-acid chain; its full sequence is Centromere protein T (561 aa).

The segment at 1–83 (MADHNPDSDS…HIQASGHLEE (83 aa)) is disordered. The segment covering 18–27 (RVLDTADPRT) has biased composition (basic and acidic residues). Residues 34-46 (ARAGARRALLETA) are compositionally biased toward low complexity. Position 47 is a phosphoserine (Ser47). Phosphothreonine is present on Thr85. Residues 93–421 (ILLTAPESSI…RHHQFLEPAP (329 aa)) are flexible stalk domain. Disordered stretches follow at residues 256–292 (HSLP…PGKP) and 333–457 (AEKK…DPHK). The segment covering 276–288 (KTQSSGPGLQKNS) has biased composition (polar residues). Phosphoserine is present on residues Ser343, Ser345, and Ser356. The span at 357–367 (RVEEAEGHTEV) shows a compositional bias: basic and acidic residues. Residues Ser373, Ser385, Ser386, and Ser397 each carry the phosphoserine modification. The span at 395 to 407 (AASPESASSTPES) shows a compositional bias: low complexity.

It belongs to the CENP-T/CNN1 family. Component of the CENPA-CAD complex, composed of CENPI, CENPK, CENPL, CENPO, CENPP, CENPQ, CENPR and CENPS. The CENPA-CAD complex is probably recruited on centromeres by the CENPA-NAC complex, at least composed of CENPA, CENPC, CENPH, CENPM, CENPN, CENPT and CENPU. Identified in a centromeric complex containing histones H2A, H2B, H3 and H4, and at least CENPA, CENPB, CENPC, CENPT, CENPN, HJURP, SUPT16H, SSRP1 and RSF1. Interacts (via N-terminus) with the NDC80 complex. Heterodimer with CENPW; this dimer coassembles with CENPS-CENPX heterodimers at centromeres to form the tetrameric CENP-T-W-S-X complex. Post-translationally, dynamically phosphorylated at Ser-47 and probably also other sites during the cell cycle. Phosphorylated at Ser-47 during G2 phase, metaphase and anaphase, but not during telophase or G1 phase.

The protein localises to the nucleus. It localises to the chromosome. It is found in the centromere. The protein resides in the kinetochore. In terms of biological role, component of the CENPA-NAC (nucleosome-associated) complex, a complex that plays a central role in assembly of kinetochore proteins, mitotic progression and chromosome segregation. The CENPA-NAC complex recruits the CENPA-CAD (nucleosome distal) complex and may be involved in incorporation of newly synthesized CENPA into centromeres. Part of a nucleosome-associated complex that binds specifically to histone H3-containing nucleosomes at the centromere, as opposed to nucleosomes containing CENPA. Component of the heterotetrameric CENP-T-W-S-X complex that binds and supercoils DNA, and plays an important role in kinetochore assembly. CENPT has a fundamental role in kinetochore assembly and function. It is one of the inner kinetochore proteins, with most further proteins binding downstream. Required for normal chromosome organization and normal progress through mitosis. The chain is Centromere protein T (CENPT) from Homo sapiens (Human).